A 374-amino-acid chain; its full sequence is Alanine racemase (374 aa).

The active-site Proton acceptor; specific for D-alanine is the Lys34. Position 34 is an N6-(pyridoxal phosphate)lysine (Lys34). A substrate-binding site is contributed by Arg138. Tyr265 (proton acceptor; specific for L-alanine) is an active-site residue. Position 313 (Met313) interacts with substrate.

It belongs to the alanine racemase family. Pyridoxal 5'-phosphate serves as cofactor.

The catalysed reaction is L-alanine = D-alanine. It participates in amino-acid biosynthesis; D-alanine biosynthesis; D-alanine from L-alanine: step 1/1. Catalyzes the interconversion of L-alanine and D-alanine. May also act on other amino acids. In Hahella chejuensis (strain KCTC 2396), this protein is Alanine racemase (alr).